A 337-amino-acid chain; its full sequence is Thymidylate synthase (337 aa).

DUMP is bound by residues Arg-74 and 199–200 (RR). The active-site Nucleophile is the Cys-219. DUMP-binding positions include 239 to 242 (RSGD), Asn-250, and 280 to 282 (HIY). A (6R)-5,10-methylene-5,6,7,8-tetrahydrofolate-binding site is contributed by Asp-242. Position 336 (Ala-336) interacts with (6R)-5,10-methylene-5,6,7,8-tetrahydrofolate.

The protein belongs to the thymidylate synthase family. Homodimer.

It carries out the reaction dUMP + (6R)-5,10-methylene-5,6,7,8-tetrahydrofolate = 7,8-dihydrofolate + dTMP. Its pathway is pyrimidine metabolism; dTTP biosynthesis. This is Thymidylate synthase (70) from Homo sapiens (Human).